The following is a 266-amino-acid chain: UPF0294 protein YafD (266 aa).

This sequence belongs to the UPF0294 family.

The protein localises to the cytoplasm. In Salmonella dublin (strain CT_02021853), this protein is UPF0294 protein YafD.